The primary structure comprises 687 residues: Sphingoid long chain base kinase 5 (687 aa).

A disordered region spans residues 1–20 (MTLKPSKRRKGRSRHSRKKQ). 2 S-palmitoyl cysteine; by AKR1 lipidation sites follow: Cys91 and Cys94. Residues 101-116 (IDRSETSTTDTSKDDL) are compositionally biased toward basic and acidic residues. 2 disordered regions span residues 101–130 (IDRSETSTTDTSKDDLSANPKLHYPSVNGQ) and 180–207 (DELESSQKKERKGNSLSRGSNSSSSLLT). The span at 193–207 (NSLSRGSNSSSSLLT) shows a compositional bias: low complexity. Positions 266 to 405 (RRNKSIFVII…IDLMCCSQPS (140 aa)) constitute a DAGKc domain. ATP-binding positions include 276–278 (NPF) and Thr308. 333–336 (SGDG) lines the substrate pocket. The active-site Proton donor/acceptor is the Asp335. Residues Glu340, 366-368 (GSG), Arg434, and Arg440 each bind ATP. Over residues 506-524 (EYETENEDEDEDADADDED) the composition is skewed to acidic residues. The interval 506-525 (EYETENEDEDEDADADDEDS) is disordered. An ATP-binding site is contributed by 652 to 654 (DGE).

Its subcellular location is the golgi apparatus membrane. It carries out the reaction (4R)-hydroxysphinganine + ATP = (4R)-hydroxysphinganine 1-phosphate + ADP + H(+). It catalyses the reaction a sphingoid base + ATP = a sphingoid 1-phosphate + ADP + H(+). The enzyme catalyses sphinganine + ATP = sphinganine 1-phosphate + ADP + H(+). Catalyzes the phosphorylation of the sphingoid long chain bases dihydrosphingosine (DHS or sphinganine) and phytosphingosine (PHS) to form dihydrosphingosine 1-phosphate (DHS-1P) and phytosphingosine 1-phosphate (PHS-1P) respectively. Redundant to LCB4, is only responsible for few percent of the total activity. Involved in the biosynthesis of sphingolipids and ceramides. Involved in heat-induced transient cell cycle arrest. Accumulation of phosphorylated sphingoid long chain bases (LCBPs) stimulates calcium influx and activates calcineurin signaling. Involved in heat-stress resistance. In Saccharomyces cerevisiae (strain ATCC 204508 / S288c) (Baker's yeast), this protein is Sphingoid long chain base kinase 5 (LCB5).